The chain runs to 311 residues: Malate dehydrogenase (311 aa).

NAD(+) contacts are provided by residues 7 to 12 and aspartate 32; that span reads GAGNVG. Substrate contacts are provided by arginine 82 and arginine 88. NAD(+) contacts are provided by residues asparagine 95 and 118–120; that span reads VSN. Asparagine 120 and arginine 151 together coordinate substrate. Histidine 175 functions as the Proton acceptor in the catalytic mechanism.

Belongs to the LDH/MDH superfamily. MDH type 3 family. Homotetramer.

It carries out the reaction (S)-malate + NAD(+) = oxaloacetate + NADH + H(+). Strongly inhibited by iodoacetic acid and CuCl(2). Completely inhibited by N-ethylmaleimide and HgCl(2). Catalyzes the reversible oxidation of malate to oxaloacetate. Can use both NAD and NADP for malate oxidation, but NADPH cannot be used for oxaloacetate reduction. The protein is Malate dehydrogenase of Flavobacterium frigidimaris.